Reading from the N-terminus, the 325-residue chain is Iodotyrosine dehalogenase 1 homolog (325 aa).

The chain crosses the membrane as a helical span at residues 42–62; the sequence is VLNVLFTLGVILFVIYQVASL. The Cytoplasmic portion of the chain corresponds to 63 to 325; it reads LHRMNKRVEK…KPVEHITKLY (263 aa). FMN-binding positions include 135 to 139, 163 to 164, 273 to 275, and R315; these read RRSCR, SV, and VTS.

The protein belongs to the nitroreductase family. It depends on FMN as a cofactor. In terms of tissue distribution, expressed in body-wall, anal depressor and vulval muscles.

The protein localises to the membrane. Functionally, may contribute to coordination of muscle contraction as regulatory subunit of the nonessential sup-9 potassium channel complex. May act downstream of sup-10. The protein is Iodotyrosine dehalogenase 1 homolog of Caenorhabditis elegans.